The primary structure comprises 235 residues: Proteasome subunit alpha type-2-B (235 aa).

Residue Lys64 forms a Glycyl lysine isopeptide (Lys-Gly) (interchain with G-Cter in ubiquitin) linkage.

Belongs to the peptidase T1A family. Component of the 20S core complex of the 26S proteasome. The 26S proteasome is composed of a core protease (CP), known as the 20S proteasome, capped at one or both ends by the 19S regulatory particle (RP/PA700). The 20S proteasome core is composed of 28 subunits that are arranged in four stacked rings, resulting in a barrel-shaped structure. The two end rings are each formed by seven alpha subunits, and the two central rings are each formed by seven beta subunits. The catalytic chamber with the active sites is on the inside of the barrel.

The protein resides in the cytoplasm. Its subcellular location is the nucleus. In terms of biological role, the proteasome is a multicatalytic proteinase complex which is characterized by its ability to cleave peptides with Arg, Phe, Tyr, Leu, and Glu adjacent to the leaving group at neutral or slightly basic pH. The proteasome has an ATP-dependent proteolytic activity. This chain is Proteasome subunit alpha type-2-B (PAB2), found in Arabidopsis thaliana (Mouse-ear cress).